Reading from the N-terminus, the 369-residue chain is uncharacterized protein (369 aa).

Disordered regions lie at residues Met1–Ser42, Pro60–Asp107, Ala146–Gly177, and Leu214–Asp369. Over residues Val12–Asn24 the composition is skewed to polar residues. 2 stretches are compositionally biased toward low complexity: residues Ser30–Ser42 and Tyr70–Ser86. Polar residues predominate over residues Ala87–Asn101. Residues Asp155 to Gly169 show a composition bias toward acidic residues. Low complexity predominate over residues Asn219–Tyr324.

This is an uncharacterized protein from Dictyostelium discoideum (Social amoeba).